The primary structure comprises 750 residues: Photosystem I P700 chlorophyll a apoprotein A1 (750 aa).

8 consecutive transmembrane segments (helical) span residues 70 to 93 (VFSA…FHGA), 156 to 179 (LYCT…FHYH), 195 to 219 (LNHH…HVSL), 291 to 309 (TAHH…GHMY), 346 to 369 (WHAQ…HHMY), 385 to 411 (LSLF…IFMV), 433 to 455 (AIIS…LYIH), and 531 to 549 (FLVH…LILL). Residues cysteine 573 and cysteine 582 each contribute to the [4Fe-4S] cluster site. Transmembrane regions (helical) follow at residues 589–610 (HVFL…HFSW) and 664–686 (LSAY…MFLF). Residue histidine 675 coordinates chlorophyll a'. Chlorophyll a-binding residues include methionine 683 and tyrosine 691. Residue tryptophan 692 participates in phylloquinone binding. A helical transmembrane segment spans residues 724-744 (AVGVAHYLLGGIATTWAFFLA).

Belongs to the PsaA/PsaB family. As to quaternary structure, the PsaA/B heterodimer binds the P700 chlorophyll special pair and subsequent electron acceptors. PSI consists of a core antenna complex that captures photons, and an electron transfer chain that converts photonic excitation into a charge separation. The eukaryotic PSI reaction center is composed of at least 11 subunits. Requires P700 is a chlorophyll a/chlorophyll a' dimer, A0 is one or more chlorophyll a, A1 is one or both phylloquinones and FX is a shared 4Fe-4S iron-sulfur center. as cofactor.

Its subcellular location is the plastid. It is found in the chloroplast thylakoid membrane. It catalyses the reaction reduced [plastocyanin] + hnu + oxidized [2Fe-2S]-[ferredoxin] = oxidized [plastocyanin] + reduced [2Fe-2S]-[ferredoxin]. PsaA and PsaB bind P700, the primary electron donor of photosystem I (PSI), as well as the electron acceptors A0, A1 and FX. PSI is a plastocyanin-ferredoxin oxidoreductase, converting photonic excitation into a charge separation, which transfers an electron from the donor P700 chlorophyll pair to the spectroscopically characterized acceptors A0, A1, FX, FA and FB in turn. Oxidized P700 is reduced on the lumenal side of the thylakoid membrane by plastocyanin. The polypeptide is Photosystem I P700 chlorophyll a apoprotein A1 (Angiopteris evecta (Mule's foot fern)).